An 892-amino-acid polypeptide reads, in one-letter code: Zinc finger protein 473 homolog (892 aa).

Residues 23 to 101 form the KRAB domain; it reads ETLKDLAMDF…TKSSPLQSGF (79 aa). Polar residues-rich tracts occupy residues 66-76 and 84-97; these read DTSQPSLTSQP and ATST…SSPL. 2 disordered regions span residues 66-97 and 134-203; these read DTSQ…SSPL and GDPE…DSVQ. Basic and acidic residues-rich tracts occupy residues 138–156 and 190–203; these read SLPR…HQSP and KESR…DSVQ. 2 C2H2-type zinc fingers span residues 209–231 and 265–287; these read YKCS…WVLH and YTCQ…QKIH. Positions 297-308 are enriched in polar residues; it reads SDSNLEGLSRSP. Positions 297-370 are disordered; sequence SDSNLEGLSR…HPKPLRHQKT (74 aa). Basic and acidic residues-rich tracts occupy residues 313 to 323 and 332 to 353; these read GKQRLSKDTDS and QDQE…ESQP. 8 C2H2-type zinc fingers span residues 377–399, 404–426, 432–454, 460–482, 488–510, 516–538, 544–566, and 572–594; these read FRCK…QRAH, YKCA…RKSH, CECQ…QAIH, YKCD…QRIH, HKCS…QRVH, HQCP…RLRH, FGCA…NKIH, and YECK…LSIH. A Glycyl lysine isopeptide (Lys-Gly) (interchain with G-Cter in SUMO2) cross-link involves residue lysine 476. Lysine 602 is covalently cross-linked (Glycyl lysine isopeptide (Lys-Gly) (interchain with G-Cter in SUMO2)). The segment at 697 to 719 adopts a C2H2-type 11; degenerate zinc-finger fold; that stretch reads FKCDIYNRAFKQRAHLSKHQLIH. C2H2-type zinc fingers lie at residues 725–747, 753–775, 781–803, 809–831, 837–859, and 865–887; these read FKCN…QKTH, FECS…QKIH, FKCG…QRIH, YVCQ…LRIH, YTCG…ERIH, and YACG…QRIH.

Belongs to the krueppel C2H2-type zinc-finger protein family. In terms of assembly, interacts with the SLBP/pre-mRNA complex but not with SLBP alone. Interacts with LSM11 in a U7 snRNP-dependent manner.

Its subcellular location is the nucleus. In terms of biological role, involved in histone 3'-end pre-mRNA processing by associating with U7 snRNP and interacting with SLBP/pre-mRNA complex. Increases histone 3'-end pre-mRNA processing but has no effect on U7 snRNP levels, when overexpressed. Required for cell cycle progression from G1 to S phases. The polypeptide is Zinc finger protein 473 homolog (Znf473) (Mus musculus (Mouse)).